Consider the following 286-residue polypeptide: 33 kDa chaperonin (286 aa).

2 cysteine pairs are disulfide-bonded: cysteine 233/cysteine 235 and cysteine 267/cysteine 270.

This sequence belongs to the HSP33 family. Under oxidizing conditions two disulfide bonds are formed involving the reactive cysteines. Under reducing conditions zinc is bound to the reactive cysteines and the protein is inactive.

It localises to the cytoplasm. Redox regulated molecular chaperone. Protects both thermally unfolding and oxidatively damaged proteins from irreversible aggregation. Plays an important role in the bacterial defense system toward oxidative stress. The sequence is that of 33 kDa chaperonin from Histophilus somni (strain 2336) (Haemophilus somnus).